Reading from the N-terminus, the 367-residue chain is Germination protease (367 aa).

A propeptide spanning residues 1-15 is cleaved from the precursor; the sequence is MKEPLDLSKYSIRTD.

It belongs to the peptidase A25 family. As to quaternary structure, homotetramer. In terms of processing, autoproteolytically processed. The inactive tetrameric zymogen termed p46 autoprocesses to a smaller form termed p41, which is active only during spore germination.

The catalysed reaction is Endopeptidase action with P4 Glu or Asp, P1 preferably Glu &gt; Asp, P1' hydrophobic and P2' Ala.. In terms of biological role, initiates the rapid degradation of small, acid-soluble proteins during spore germination. The polypeptide is Germination protease (Bacillus cereus (strain ATCC 14579 / DSM 31 / CCUG 7414 / JCM 2152 / NBRC 15305 / NCIMB 9373 / NCTC 2599 / NRRL B-3711)).